Here is a 262-residue protein sequence, read N- to C-terminus: Dihydroorotate dehydrogenase B (NAD(+)), electron transfer subunit (262 aa).

Residues 3-104 (QLQEMMTVVS…MGPLGNGFPV (102 aa)) enclose the FAD-binding FR-type domain. FAD-binding positions include 53 to 56 (RPIS), 70 to 72 (LYR), and 79 to 80 (GT). [2Fe-2S] cluster-binding residues include C226, C231, C234, and C249.

The protein belongs to the PyrK family. As to quaternary structure, heterotetramer of 2 PyrK and 2 PyrD type B subunits. Requires [2Fe-2S] cluster as cofactor. It depends on FAD as a cofactor.

It functions in the pathway pyrimidine metabolism; UMP biosynthesis via de novo pathway; orotate from (S)-dihydroorotate (NAD(+) route): step 1/1. Responsible for channeling the electrons from the oxidation of dihydroorotate from the FMN redox center in the PyrD type B subunit to the ultimate electron acceptor NAD(+). This chain is Dihydroorotate dehydrogenase B (NAD(+)), electron transfer subunit, found in Lactococcus lactis subsp. cremoris (strain SK11).